Consider the following 114-residue polypeptide: Transmembrane protein 14C (114 aa).

4 helical membrane passes run 8–28, 33–53, 63–83, and 89–109; these read LMPL…GGII, AGSV…GLGA, VWVF…RFYN, and PAGL…ISLL.

It belongs to the TMEM14 family.

The protein localises to the mitochondrion membrane. Its function is as follows. Required for normal heme biosynthesis. This chain is Transmembrane protein 14C (Tmem14c), found in Mus musculus (Mouse).